The following is a 547-amino-acid chain: CTP synthase (547 aa).

The tract at residues 1–265 (MARYVFITGG…DQAVLDAFGI (265 aa)) is amidoligase domain. Ser-13 is a binding site for CTP. Ser-13 serves as a coordination point for UTP. Residues 14 to 19 (SLGKGL) and Asp-71 each bind ATP. 2 residues coordinate Mg(2+): Asp-71 and Glu-139. CTP contacts are provided by residues 146–148 (DIE), 186–191 (KTKPTQ), and Lys-222. UTP is bound by residues 186–191 (KTKPTQ) and Lys-222. The Glutamine amidotransferase type-1 domain occupies 291-546 (RVAIVGKYTQ…VRAAVEVSRL (256 aa)). Gly-353 lines the L-glutamine pocket. Cys-380 (nucleophile; for glutamine hydrolysis) is an active-site residue. L-glutamine-binding positions include 381–384 (LGMQ), Glu-404, and Arg-474. Residues His-519 and Glu-521 contribute to the active site.

The protein belongs to the CTP synthase family. Homotetramer.

It carries out the reaction UTP + L-glutamine + ATP + H2O = CTP + L-glutamate + ADP + phosphate + 2 H(+). The enzyme catalyses L-glutamine + H2O = L-glutamate + NH4(+). It catalyses the reaction UTP + NH4(+) + ATP = CTP + ADP + phosphate + 2 H(+). It functions in the pathway pyrimidine metabolism; CTP biosynthesis via de novo pathway; CTP from UDP: step 2/2. Its activity is regulated as follows. Allosterically activated by GTP, when glutamine is the substrate; GTP has no effect on the reaction when ammonia is the substrate. The allosteric effector GTP functions by stabilizing the protein conformation that binds the tetrahedral intermediate(s) formed during glutamine hydrolysis. Inhibited by the product CTP, via allosteric rather than competitive inhibition. Catalyzes the ATP-dependent amination of UTP to CTP with either L-glutamine or ammonia as the source of nitrogen. Regulates intracellular CTP levels through interactions with the four ribonucleotide triphosphates. The polypeptide is CTP synthase (Cereibacter sphaeroides (strain ATCC 17029 / ATH 2.4.9) (Rhodobacter sphaeroides)).